A 406-amino-acid polypeptide reads, in one-letter code: Kelch domain-containing protein 2 (406 aa).

6 Kelch repeats span residues 31–85 (ERSG…NTEG), 92–136 (SGSC…ERID), 148–207 (LGVW…TWSQ), 221–259 (HACA…NELI), 271–311 (HSLT…IQFN), and 322–359 (HTAC…IFSV).

In terms of assembly, component of a CRL2(KLHDC2) E3 ubiquitin-protein ligase complex, also named ECS(KLHDC2) complex, composed of CUL2, Elongin BC (ELOB and ELOC), RBX1 and substrate-specific adapter KLHDC2. May form oligomers as a KLHDC2-ELOB-ELOC complex; this interaction is autoinhibitory for the E3 ligase complex as the substrate-binding site of KLHDC2 is blocked in the oligomer. Interacts with CREB3; interaction is direct and specific as it does not interact with CREB1, ATF4, ATF6, JUN, FOS, CEBPA or herpes simplex virus transactivator VP16. Post-translationally, autoubiquitinated by the CRL2(KLHDC2) E3 ligase complex. As to expression, widely expressed, with high levels in skeletal muscle, heart, pancreas and liver. Undetectable in peripheral blood leukocytes.

It is found in the nucleus. Its pathway is protein modification; protein ubiquitination. In terms of biological role, substrate-recognition component of a Cul2-RING (CRL2) E3 ubiquitin-protein ligase complex of the DesCEND (destruction via C-end degrons) pathway, which recognizes a C-degron located at the extreme C terminus of target proteins, leading to their ubiquitination and degradation. The C-degron recognized by the DesCEND pathway is usually a motif of less than ten residues and can be present in full-length proteins, truncated proteins or proteolytically cleaved forms. The CRL2(KLHDC2) complex specifically recognizes proteins with a diglycine (Gly-Gly) at the C-terminus, leading to their ubiquitination and degradation. The CRL2(KLHDC2) complex mediates ubiquitination and degradation of truncated SELENOK and SELENOS selenoproteins produced by failed UGA/Sec decoding, which end with a diglycine. The CRL2(KLHDC2) complex also recognizes proteolytically cleaved proteins ending with Gly-Gly, such as the N-terminal fragment of USP1, leading to their degradation. May also act as an indirect repressor of CREB3-mediated transcription by interfering with CREB3-DNA-binding. This Homo sapiens (Human) protein is Kelch domain-containing protein 2.